We begin with the raw amino-acid sequence, 120 residues long: uncharacterized protein (120 aa).

3 helical membrane-spanning segments follow: residues Ala24–Tyr44, Ile61–Val81, and Pro86–Val106.

This sequence to M.leprae ML1176.

It localises to the cell membrane. This is an uncharacterized protein from Mycobacterium bovis (strain ATCC BAA-935 / AF2122/97).